A 389-amino-acid polypeptide reads, in one-letter code: Na(+)/H(+) antiporter NhaA 1 (389 aa).

The next 12 membrane-spanning stretches (helical) occupy residues 12–32 (VLNE…ALLV), 62–82 (FLLW…GLEL), 97–117 (IVLP…LFVL), 128–148 (GWAI…MMCG), 157–177 (IFLL…IAIF), 184–204 (IVAF…NILG), 220–240 (ISVL…AFFI), 260–280 (FWLA…VNLS), 282–302 (IDIG…LFVG), 305–325 (AGVF…LPQG), 331–351 (LYGV…IDGL), and 365–385 (LAIL…LKFF).

Belongs to the NhaA Na(+)/H(+) (TC 2.A.33) antiporter family.

It localises to the cell inner membrane. It catalyses the reaction Na(+)(in) + 2 H(+)(out) = Na(+)(out) + 2 H(+)(in). Na(+)/H(+) antiporter that extrudes sodium in exchange for external protons. The sequence is that of Na(+)/H(+) antiporter NhaA 1 from Campylobacter jejuni subsp. jejuni serotype O:23/36 (strain 81-176).